Reading from the N-terminus, the 614-residue chain is UvrABC system protein C (614 aa).

The 79-residue stretch at 20–98 (TAPGVYRMYA…IKSLSPRYNV (79 aa)) folds into the GIY-YIG domain. In terms of domain architecture, UVR spans 207–242 (DELTRELGEQMQAASEALEFEQAARLRDLISSLRSM).

The protein belongs to the UvrC family. Interacts with UvrB in an incision complex.

It localises to the cytoplasm. Its function is as follows. The UvrABC repair system catalyzes the recognition and processing of DNA lesions. UvrC both incises the 5' and 3' sides of the lesion. The N-terminal half is responsible for the 3' incision and the C-terminal half is responsible for the 5' incision. The sequence is that of UvrABC system protein C from Stenotrophomonas maltophilia (strain K279a).